The primary structure comprises 502 residues: 2-isopropylmalate synthase (502 aa).

Aspartate 1, histidine 189, histidine 191, and asparagine 225 together coordinate Mn(2+). A Pyruvate carboxyltransferase domain is found at 1–254 (DGEQALQASL…STNINYKEIY (254 aa)). Positions 379 to 502 (CLKFFSVQSI…VNKKLQELKK (124 aa)) are regulatory domain.

Belongs to the alpha-IPM synthase/homocitrate synthase family. LeuA type 1 subfamily. In terms of assembly, homodimer. It depends on Mn(2+) as a cofactor.

It is found in the cytoplasm. The enzyme catalyses 3-methyl-2-oxobutanoate + acetyl-CoA + H2O = (2S)-2-isopropylmalate + CoA + H(+). Its pathway is amino-acid biosynthesis; L-leucine biosynthesis; L-leucine from 3-methyl-2-oxobutanoate: step 1/4. Functionally, catalyzes the condensation of the acetyl group of acetyl-CoA with 3-methyl-2-oxobutanoate (2-ketoisovalerate) to form 3-carboxy-3-hydroxy-4-methylpentanoate (2-isopropylmalate). The sequence is that of 2-isopropylmalate synthase from Buchnera aphidicola subsp. Macrosiphoniella ludovicianae.